A 334-amino-acid polypeptide reads, in one-letter code: N-acetyl-gamma-glutamyl-phosphate reductase (334 aa).

Residue Cys-154 is part of the active site.

Belongs to the NAGSA dehydrogenase family. Type 1 subfamily.

The protein localises to the cytoplasm. The catalysed reaction is N-acetyl-L-glutamate 5-semialdehyde + phosphate + NADP(+) = N-acetyl-L-glutamyl 5-phosphate + NADPH + H(+). It functions in the pathway amino-acid biosynthesis; L-arginine biosynthesis; N(2)-acetyl-L-ornithine from L-glutamate: step 3/4. Functionally, catalyzes the NADPH-dependent reduction of N-acetyl-5-glutamyl phosphate to yield N-acetyl-L-glutamate 5-semialdehyde. The protein is N-acetyl-gamma-glutamyl-phosphate reductase of Vibrio parahaemolyticus serotype O3:K6 (strain RIMD 2210633).